The chain runs to 633 residues: ATP-dependent clpX-like chaperone, mitochondrial (633 aa).

The transit peptide at 1–56 directs the protein to the mitochondrion; sequence MPSCGACTCGAAAVRLITSSLASAQRGISGGRIHMSVLGRLGTFETQILQRAPLRS. The interval 68 to 100 is disordered; the sequence is DGISKDGSGDGNKKSASEGSSKKSGSGNSGKGG. Basic and acidic residues predominate over residues 69–83; sequence GISKDGSGDGNKKSA. Over residues 84-93 the composition is skewed to low complexity; that stretch reads SEGSSKKSGS. Positions 93 to 146 constitute a ClpX-type ZB domain; the sequence is SGNSGKGGNQLRCPKCGDLCTHVETFVSSTRFVKCEKCHHFFVVLSEADSKKSI. Zn(2+)-binding residues include Cys105, Cys108, Cys127, and Cys130. 294–301 contributes to the ATP binding site; that stretch reads PTGSGKTL. Position 437 is an N6-acetyllysine (Lys437). Residues 598–610 show a composition bias toward basic and acidic residues; it reads KEPGYIRAPTKES. The tract at residues 598-633 is disordered; it reads KEPGYIRAPTKESSEEEYDSGVEEEGWPRQADAANS. Over residues 611 to 622 the composition is skewed to acidic residues; the sequence is SEEEYDSGVEEE. The residue at position 617 (Ser617) is a Phosphoserine.

This sequence belongs to the ClpX chaperone family. As to quaternary structure, homohexamer that forms a ring structure; this hexamerization requires ATP binding. Component of the ClpXP complex formed by the assembly of two CLPP heptameric rings with two CLPX hexameric rings, giving rise to a symmetrical structure with two central CLPP rings flanked by a CLPX ring at either end of the complex. Interacts with TFAM. As to expression, higher expression in skeletal muscle and heart and to a lesser extent in liver, brain, placenta, lung, kidney and pancreas.

It localises to the mitochondrion. Its subcellular location is the mitochondrion matrix. It is found in the mitochondrion nucleoid. It catalyses the reaction ATP + H2O = ADP + phosphate + H(+). Functionally, ATP-dependent chaperone that functions as an unfoldase. As part of the ClpXP protease complex, it recognizes specific protein substrates, unfolds them using energy derived from ATP hydrolysis, and then translocates them to the proteolytic subunit (CLPP) of the ClpXP complex for degradation. Thanks to its chaperone activity, it also functions in the incorporation of the pyridoxal phosphate cofactor into 5-aminolevulinate synthase, thereby activating 5-aminolevulinate (ALA) synthesis, the first step in heme biosynthesis. This chaperone is also involved in the control of mtDNA nucleoid distribution, by regulating mitochondrial transcription factor A (TFAM) activity. In Homo sapiens (Human), this protein is ATP-dependent clpX-like chaperone, mitochondrial.